Consider the following 503-residue polypeptide: Probable zinc metalloprotease UREG_01421 (503 aa).

The N-terminal stretch at 1-24 (MHSLSSALAGSTFVLLFLCLLASA) is a signal peptide. An N-linked (GlcNAc...) asparagine glycan is attached at asparagine 105. Positions 176, 196, and 232 each coordinate Zn(2+). N-linked (GlcNAc...) asparagine glycosylation occurs at asparagine 247. Aspartate 259 contacts Zn(2+). The Fibronectin type-III domain maps to 416 to 503 (MPRNVRVSTR…RGVAVLPFPA (88 aa)). N-linked (GlcNAc...) asparagine glycosylation is present at asparagine 429.

Belongs to the peptidase M28 family. M28B subfamily. Zn(2+) serves as cofactor.

It localises to the secreted. The polypeptide is Probable zinc metalloprotease UREG_01421 (Uncinocarpus reesii (strain UAMH 1704)).